The primary structure comprises 574 residues: 5'-nucleotidase (574 aa).

An N-terminal signal peptide occupies residues 1–26; sequence MNPGAARTPALRILALGALLWPAARP. Zn(2+) is bound by residues aspartate 36 and histidine 38. Cysteine 51 and cysteine 57 are oxidised to a cystine. Residue asparagine 53 is glycosylated (N-linked (GlcNAc...) asparagine). Residues aspartate 85, asparagine 117, histidine 220, and histidine 243 each coordinate Zn(2+). 2 N-linked (GlcNAc...) asparagine glycosylation sites follow: asparagine 311 and asparagine 333. Cystine bridges form between cysteine 353–cysteine 358 and cysteine 365–cysteine 387. Arginine 354 is an AMP binding site. Arginine 354 is a binding site for IMP. AMP-binding residues include asparagine 390 and arginine 395. The IMP site is built by asparagine 390 and arginine 395. Asparagine 403 is a glycosylation site (N-linked (GlcNAc...) asparagine). AMP is bound at residue phenylalanine 417. Phenylalanine 417 is an IMP binding site. An intrachain disulfide couples cysteine 476 to cysteine 479. AMP-binding residues include phenylalanine 500 and aspartate 506. IMP-binding residues include phenylalanine 500 and aspartate 506. Serine 549 carries the GPI-anchor amidated serine lipid modification. The propeptide at 550 to 574 is removed in mature form; that stretch reads AGSHCCGSFSLIFLSVLAVIIILYQ.

Belongs to the 5'-nucleotidase family. In terms of assembly, homodimer. Zn(2+) is required as a cofactor.

Its subcellular location is the cell membrane. It catalyses the reaction a ribonucleoside 5'-phosphate + H2O = a ribonucleoside + phosphate. The catalysed reaction is a 2'-deoxyribonucleoside 5'-phosphate + H2O = a 2'-deoxyribonucleoside + phosphate. The enzyme catalyses dTMP + H2O = thymidine + phosphate. It carries out the reaction CMP + H2O = cytidine + phosphate. It catalyses the reaction IMP + H2O = inosine + phosphate. The catalysed reaction is AMP + H2O = adenosine + phosphate. The enzyme catalyses GMP + H2O = guanosine + phosphate. It carries out the reaction UMP + H2O = uridine + phosphate. It catalyses the reaction dAMP + H2O = 2'-deoxyadenosine + phosphate. The catalysed reaction is dCMP + H2O = 2'-deoxycytidine + phosphate. Functionally, catalyzes the hydrolysis of nucleotide monophosphates, releasing inorganic phosphate and the corresponding nucleoside, with AMP being the preferred substrate. Shows a preference for ribonucleotide monophosphates over their equivalent deoxyribose forms. Other substrates include IMP, UMP, GMP, CMP, dAMP, dCMP, dTMP, NAD and NMN. The protein is 5'-nucleotidase (NT5E) of Bos taurus (Bovine).